A 330-amino-acid polypeptide reads, in one-letter code: MTPSNMDDNTSGFMKFINPQCQEEDCCIRNSLFQEDSKCIKQQPDLLSEQTAPFPILEDQCPALNLDRSNNDLLLQNNISFPKGSDLQAIQLTPISGDYSTYVMADNNNNDNDSYSNTNYFSKNNGISPSSRSPSVAHNENVPDDSKAKKKAQNRAAQKAFRERKEARMKELQDKLLESERNRQSLLKEIEELRKANTEINAENRLLLRSGNENFSKDIEDDTNYKYSFPTKDEFFTSMVLESKLNHKGKYSLKDNEIMKRNTQYTDEAGRHVLTVPATWEYLYKLSEERDFDVTYVMSKLQGQECCHTHGPAYPRSLIDFLVEEATLNE.

Residues 114–150 (SYSNTNYFSKNNGISPSSRSPSVAHNENVPDDSKAKK) are disordered. Positions 121–138 (FSKNNGISPSSRSPSVAH) are enriched in polar residues. Residue Ser135 is modified to Phosphoserine. The bZIP domain occupies 144–207 (DDSKAKKKAQ…TEINAENRLL (64 aa)). The basic motif stretch occupies residues 147–168 (KAKKKAQNRAAQKAFRERKEAR). The leucine-zipper stretch occupies residues 172 to 207 (LQDKLLESERNRQSLLKEIEELRKANTEINAENRLL).

Belongs to the bZIP family. YAP subfamily. As to quaternary structure, homodimer. Interacts with the C-terminal, cytoplasmic tail of the multidrug resistance ABC transporter PDR5.

It is found in the cytoplasm. It localises to the nucleus. Transcription activator involved in the regulation of genes expressed in response to environmental changes. When overexpressed it activates transcription of the multidrug resistance ABC transporter PDR5, thus conferring resistance to the fungicide fluconazole (FCZ) and cycloheximide. When overexpressed, it also confers, independent of PDR5, increased resistance to 4-nitroquinoline-N-oxide (4-NQO). Preferentially binds 5'-TTACTAA-3'. This Saccharomyces cerevisiae (strain ATCC 204508 / S288c) (Baker's yeast) protein is AP-1-like transcription factor YAP3 (YAP3).